The sequence spans 443 residues: Tol-Pal system protein TolB (443 aa).

An N-terminal signal peptide occupies residues 1–33; the sequence is MKIGIINTKIRTVFSAFACMIAASLVCTMPARA.

It belongs to the TolB family. The Tol-Pal system is composed of five core proteins: the inner membrane proteins TolA, TolQ and TolR, the periplasmic protein TolB and the outer membrane protein Pal. They form a network linking the inner and outer membranes and the peptidoglycan layer.

It is found in the periplasm. Its function is as follows. Part of the Tol-Pal system, which plays a role in outer membrane invagination during cell division and is important for maintaining outer membrane integrity. The sequence is that of Tol-Pal system protein TolB from Brucella suis biovar 1 (strain 1330).